We begin with the raw amino-acid sequence, 417 residues long: Gamma-glutamyl phosphate reductase (417 aa).

Belongs to the gamma-glutamyl phosphate reductase family.

It localises to the cytoplasm. It carries out the reaction L-glutamate 5-semialdehyde + phosphate + NADP(+) = L-glutamyl 5-phosphate + NADPH + H(+). It participates in amino-acid biosynthesis; L-proline biosynthesis; L-glutamate 5-semialdehyde from L-glutamate: step 2/2. In terms of biological role, catalyzes the NADPH-dependent reduction of L-glutamate 5-phosphate into L-glutamate 5-semialdehyde and phosphate. The product spontaneously undergoes cyclization to form 1-pyrroline-5-carboxylate. The protein is Gamma-glutamyl phosphate reductase of Escherichia coli O157:H7.